Reading from the N-terminus, the 89-residue chain is Small ribosomal subunit protein bS20 (89 aa).

Residues 1–29 (MTLANIKSAKKRAVQSEKRRQHNASQRSM) are disordered.

This sequence belongs to the bacterial ribosomal protein bS20 family.

Its function is as follows. Binds directly to 16S ribosomal RNA. In Haemophilus influenzae (strain 86-028NP), this protein is Small ribosomal subunit protein bS20.